The chain runs to 564 residues: Iron-sensing transcriptional repressor (564 aa).

The segment at 12–36 (CSNCHKTTTSLWRRGPDNSLLCNAC) adopts a GATA-type 1 zinc-finger fold. The segment at 100-170 (ASKSQSGRKS…SSPPHEPSVT (71 aa)) is disordered. Serine 109 bears the Phosphoserine mark. The span at 109–120 (SLSPNPSSVPSS) shows a compositional bias: low complexity. Residues 135 to 148 (QIVSDTTTETSNGT) are compositionally biased toward polar residues. Residues 172–196 (CQNCATTNTPLWRRDESGNPICNAC) form a GATA-type 2 zinc finger. Disordered stretches follow at residues 226-285 (GNAN…NTGV), 381-409 (DSSK…NPLG), and 443-496 (LLNP…VQGS). Polar residues-rich tracts occupy residues 240–253 (SGDS…QSTR), 260–271 (SFPNGNGHASGN), 381–407 (DSSK…QSNP), and 450–486 (PSNS…SPVS).

In terms of assembly, interacts with tup11.

The protein resides in the nucleus. Activated by iron. In terms of biological role, transcriptional repressor that binds the consensus promoter sequence 5'-[AT]GATAA-3' during iron-replete conditions to down-regulate transcription of target genes. Represses the expression of the iron transporter fio1 in response to high iron concentrations. Also represses the expression of str1, str2 and str3. Represses the expression of shu1 in presence of iron. The chain is Iron-sensing transcriptional repressor from Schizosaccharomyces pombe (strain 972 / ATCC 24843) (Fission yeast).